Here is a 126-residue protein sequence, read N- to C-terminus: Ribosome-binding factor A (126 aa).

The protein belongs to the RbfA family. Monomer. Binds 30S ribosomal subunits, but not 50S ribosomal subunits or 70S ribosomes.

It is found in the cytoplasm. In terms of biological role, one of several proteins that assist in the late maturation steps of the functional core of the 30S ribosomal subunit. Associates with free 30S ribosomal subunits (but not with 30S subunits that are part of 70S ribosomes or polysomes). Required for efficient processing of 16S rRNA. May interact with the 5'-terminal helix region of 16S rRNA. This Histophilus somni (strain 129Pt) (Haemophilus somnus) protein is Ribosome-binding factor A.